Here is a 491-residue protein sequence, read N- to C-terminus: N-succinylglutamate 5-semialdehyde dehydrogenase (491 aa).

223 to 228 (GSANTG) contacts NAD(+). Residues Glu-246 and Cys-280 contribute to the active site.

This sequence belongs to the aldehyde dehydrogenase family. AstD subfamily.

It carries out the reaction N-succinyl-L-glutamate 5-semialdehyde + NAD(+) + H2O = N-succinyl-L-glutamate + NADH + 2 H(+). Its pathway is amino-acid degradation; L-arginine degradation via AST pathway; L-glutamate and succinate from L-arginine: step 4/5. Its function is as follows. Catalyzes the NAD-dependent reduction of succinylglutamate semialdehyde into succinylglutamate. This is N-succinylglutamate 5-semialdehyde dehydrogenase from Photorhabdus laumondii subsp. laumondii (strain DSM 15139 / CIP 105565 / TT01) (Photorhabdus luminescens subsp. laumondii).